Here is a 154-residue protein sequence, read N- to C-terminus: Small ribosomal subunit protein uS7 (154 aa).

The protein belongs to the universal ribosomal protein uS7 family. Part of the 30S ribosomal subunit. Contacts proteins S9 and S11.

In terms of biological role, one of the primary rRNA binding proteins, it binds directly to 16S rRNA where it nucleates assembly of the head domain of the 30S subunit. Is located at the subunit interface close to the decoding center, probably blocks exit of the E-site tRNA. This is Small ribosomal subunit protein uS7 from Karelsulcia muelleri (strain GWSS) (Sulcia muelleri).